The sequence spans 450 residues: Glutamyl-tRNA(Gln) amidotransferase subunit A, mitochondrial (450 aa).

Catalysis depends on charge relay system residues Lys-47 and Ser-122. Ser-146 functions as the Acyl-ester intermediate in the catalytic mechanism.

This sequence belongs to the amidase family. GatA subfamily. Subunit of the heterotrimeric GatFAB amidotransferase (AdT) complex, composed of A, B and F subunits.

The protein resides in the mitochondrion. The catalysed reaction is L-glutamyl-tRNA(Gln) + L-glutamine + ATP + H2O = L-glutaminyl-tRNA(Gln) + L-glutamate + ADP + phosphate + H(+). Allows the formation of correctly charged Gln-tRNA(Gln) through the transamidation of misacylated Glu-tRNA(Gln) in the mitochondria. The reaction takes place in the presence of glutamine and ATP through an activated gamma-phospho-Glu-tRNA(Gln). This Candida albicans (strain SC5314 / ATCC MYA-2876) (Yeast) protein is Glutamyl-tRNA(Gln) amidotransferase subunit A, mitochondrial.